A 148-amino-acid chain; its full sequence is Nucleoside diphosphate kinase (148 aa).

The ATP site is built by Lys9, Phe57, Arg85, Thr91, Arg102, and Asn112. Residue Thr91 is modified to Phosphothreonine. His115 (pros-phosphohistidine intermediate) is an active-site residue. Ser122 carries the post-translational modification Phosphoserine.

The protein belongs to the NDK family. Homotetramer. The cofactor is Mg(2+).

The protein resides in the cytoplasm. The catalysed reaction is a 2'-deoxyribonucleoside 5'-diphosphate + ATP = a 2'-deoxyribonucleoside 5'-triphosphate + ADP. It catalyses the reaction a ribonucleoside 5'-diphosphate + ATP = a ribonucleoside 5'-triphosphate + ADP. Major role in the synthesis of nucleoside triphosphates other than ATP. The ATP gamma phosphate is transferred to the NDP beta phosphate via a ping-pong mechanism, using a phosphorylated active-site intermediate. The chain is Nucleoside diphosphate kinase from Bacillus cereus (strain ATCC 10987 / NRS 248).